We begin with the raw amino-acid sequence, 466 residues long: Glutamate--tRNA ligase (466 aa).

The 'HIGH' region motif lies at 11-21 (PSPTGFIHLGN). Residues 243 to 247 (KMSKR) carry the 'KMSKS' region motif. Lysine 246 provides a ligand contact to ATP.

The protein belongs to the class-I aminoacyl-tRNA synthetase family. Glutamate--tRNA ligase type 1 subfamily. Monomer.

The protein localises to the cytoplasm. It carries out the reaction tRNA(Glu) + L-glutamate + ATP = L-glutamyl-tRNA(Glu) + AMP + diphosphate. Its function is as follows. Catalyzes the attachment of glutamate to tRNA(Glu) in a two-step reaction: glutamate is first activated by ATP to form Glu-AMP and then transferred to the acceptor end of tRNA(Glu). The protein is Glutamate--tRNA ligase of Cupriavidus taiwanensis (strain DSM 17343 / BCRC 17206 / CCUG 44338 / CIP 107171 / LMG 19424 / R1) (Ralstonia taiwanensis (strain LMG 19424)).